The chain runs to 144 residues: Neuritin-B (144 aa).

Residues 1-27 (MGLKLSGRYIFLVLAVHLAYLLQAVKA) form the signal peptide. S114 carries the GPI-anchor amidated serine lipid modification. Residues 115-144 (TGAPGPRLLFPAFLPLLIVFLSALLNWVLQ) constitute a propeptide, removed in mature form.

It belongs to the neuritin family.

The protein resides in the cell membrane. Modulates postsynaptic dendritic arbor elaboration and synaptic maturation. The polypeptide is Neuritin-B (nrn1-b) (Xenopus laevis (African clawed frog)).